Reading from the N-terminus, the 212-residue chain is Peptide methionine sulfoxide reductase MsrA (212 aa).

Residue cysteine 52 is part of the active site.

It belongs to the MsrA Met sulfoxide reductase family.

It carries out the reaction L-methionyl-[protein] + [thioredoxin]-disulfide + H2O = L-methionyl-(S)-S-oxide-[protein] + [thioredoxin]-dithiol. It catalyses the reaction [thioredoxin]-disulfide + L-methionine + H2O = L-methionine (S)-S-oxide + [thioredoxin]-dithiol. Has an important function as a repair enzyme for proteins that have been inactivated by oxidation. Catalyzes the reversible oxidation-reduction of methionine sulfoxide in proteins to methionine. In Salmonella paratyphi B (strain ATCC BAA-1250 / SPB7), this protein is Peptide methionine sulfoxide reductase MsrA.